The following is a 905-amino-acid chain: V-type proton ATPase 116 kDa subunit a 1 (905 aa).

Topologically, residues 1–424 (MGDYVTPGEE…DAYGIATYRE (424 aa)) are cytoplasmic. Residues 425 to 443 (INPAPYTMISFPFLFAVMF) form a helical membrane-spanning segment. The Lumenal segment spans residues 444 to 445 (GD). The chain crosses the membrane as a helical span at residues 446 to 462 (MGHGAIMLLAALFFILK). The Cytoplasmic portion of the chain corresponds to 463–477 (EKQLEAARIKDEIFQ). A helical membrane pass occupies residues 478 to 507 (TFFGGRYVIFLMGAFSIYTGFMYNDVFSKS). The Lumenal portion of the chain corresponds to 508-572 (INTFGSSWQN…EGNKLSFLNS (65 aa)). Residues 573-592 (MKMKMSVLFGIAQMTFGVLL) form a helical membrane-spanning segment. The Cytoplasmic segment spans residues 593-610 (SYQNFIYFKSDLDIKYMF). The helical transmembrane segment at 611–631 (IPQMIFLSSIFIYLCIQILSK) threads the bilayer. The Lumenal segment spans residues 632–699 (WLFFGAVGGT…YPGQATIEII (68 aa)). A helical membrane pass occupies residues 700–719 (LVVLALVQVPIMLFAKPYFL). Residues 720-788 (YRRDKQQSRY…DVMVYQAIHT (69 aa)) are Cytoplasmic-facing. Residues 789 to 813 (IEFVLGCVSHTASYLRLWALSLAHA) form a helical membrane-spanning segment. Residues 814–834 (QLSDVLWTMVFRNAFVLDGYT) lie on the Lumenal side of the membrane. A helical transmembrane segment spans residues 835–873 (GAIATYILFFIFGSLSVFILVLMEGLSAFLHALRLHWVE). The Cytoplasmic segment spans residues 874–905 (FQSKFYGGLGYEFAPFSFEKILAEEREAEENL).

It belongs to the V-ATPase 116 kDa subunit family. As to quaternary structure, V-ATPase is a heteromultimeric enzyme made up of two complexes: the ATP-hydrolytic V1 complex and the proton translocation V0 complex. The V1 complex consists of three catalytic AB heterodimers that form a heterohexamer, three peripheral stalks each consisting of EG heterodimers, one central rotor including subunits D and F, and the regulatory subunits C and H. The proton translocation complex V0 consists of the proton transport subunit a, a ring of proteolipid subunits c9c'', rotary subunit d, subunits e and f, and the accessory subunits vah-19/Ac45 and vah-20/PRR. Interacts with V-type proton ATPase subunit C vha-11. As to expression, ubiquitous expression in embryos. Expressed in gonads, intestine, neurons in the head and motoneurons in the ventral cord of larvae and adults. Expressed in the vulvae and spermathecal uterine valves. Weakly expressed in the pharynx. In terms of tissue distribution, specifically expressed in the nervous system.

It localises to the membrane. Its function is as follows. Subunit of the V0 complex of vacuolar(H+)-ATPase (V-ATPase), a multisubunit enzyme composed of a peripheral complex (V1) that hydrolyzes ATP and a membrane integral complex (V0) that translocates protons. V-ATPase is responsible for acidifying and maintaining the pH of intracellular compartments and in some cell types, is targeted to the plasma membrane, where it is responsible for acidifying the extracellular environment. Required for assembly and activity of the vacuolar ATPase. Regulates the size of gut granules during embryonic development. In neurons, required for necrotic cell death by promoting intracellular acidification. Required for cell death induced by hypoxia. Required for acidification of synaptic vesicles and the release of neurotransmitters from adult neurons. The protein is V-type proton ATPase 116 kDa subunit a 1 of Caenorhabditis elegans.